Here is a 457-residue protein sequence, read N- to C-terminus: Casein kinase 1-like protein 11 (457 aa).

Residues 15–284 (FKLGRKLGSG…LRRLFRDLFI (270 aa)) enclose the Protein kinase domain. ATP is bound by residues 21-29 (LGSGSFGEL) and K44. Catalysis depends on D134, which acts as the Proton acceptor. 2 disordered regions span residues 305 to 337 (GSSS…GQDL) and 352 to 442 (NVSS…EDAI). Positions 311–324 (RPTPRPALDPPGPP) are enriched in pro residues. Polar residues-rich tracts occupy residues 383-403 (NGST…SAEP) and 409-429 (SRLF…QSYE).

This sequence belongs to the protein kinase superfamily. CK1 Ser/Thr protein kinase family. Casein kinase I subfamily. As to quaternary structure, monomer. In terms of processing, autophosphorylated.

The protein resides in the cytoplasm. It localises to the nucleus. The enzyme catalyses L-seryl-[protein] + ATP = O-phospho-L-seryl-[protein] + ADP + H(+). The catalysed reaction is L-threonyl-[protein] + ATP = O-phospho-L-threonyl-[protein] + ADP + H(+). Its activity is regulated as follows. Partially inhibited by N-(2-aminoethyl)-5-chloroisoquinoline-8-sulfonamide (CKI-7). In terms of biological role, casein kinases are operationally defined by their preferential utilization of acidic proteins such as caseins as substrates. Can phosphorylate casein, phosvitin, myosin light chains and poly(Glu,Tyr) in vitro. This chain is Casein kinase 1-like protein 11, found in Arabidopsis thaliana (Mouse-ear cress).